Here is a 239-residue protein sequence, read N- to C-terminus: Fatty acid metabolism regulator protein (239 aa).

The HTH gntR-type domain occupies 6 to 74 (KGPASFAEKY…HGKPTRVNNF (69 aa)). The segment at residues 34-53 (ERELSELIGVTRTTLREVLQ) is a DNA-binding region (H-T-H motif).

As to quaternary structure, homodimer.

The protein resides in the cytoplasm. In terms of biological role, multifunctional regulator of fatty acid metabolism. The polypeptide is Fatty acid metabolism regulator protein (Shewanella pealeana (strain ATCC 700345 / ANG-SQ1)).